The chain runs to 380 residues: Cytochrome b (380 aa).

The next 4 helical transmembrane spans lie at Phe-33 to Met-53, Trp-77 to Val-98, Trp-113 to Leu-133, and Phe-178 to Leu-198. Residues His-83 and His-97 each coordinate heme b. Residues His-182 and His-196 each coordinate heme b. An a ubiquinone-binding site is contributed by His-201. 4 helical membrane-spanning segments follow: residues Ile-226 to Phe-246, Leu-288 to Asn-308, Ile-320 to Gly-340, and Phe-347 to Pro-367.

Belongs to the cytochrome b family. As to quaternary structure, the cytochrome bc1 complex contains 11 subunits: 3 respiratory subunits (MT-CYB, CYC1 and UQCRFS1), 2 core proteins (UQCRC1 and UQCRC2) and 6 low-molecular weight proteins (UQCRH/QCR6, UQCRB/QCR7, UQCRQ/QCR8, UQCR10/QCR9, UQCR11/QCR10 and a cleavage product of UQCRFS1). This cytochrome bc1 complex then forms a dimer. Requires heme b as cofactor.

The protein resides in the mitochondrion inner membrane. Functionally, component of the ubiquinol-cytochrome c reductase complex (complex III or cytochrome b-c1 complex) that is part of the mitochondrial respiratory chain. The b-c1 complex mediates electron transfer from ubiquinol to cytochrome c. Contributes to the generation of a proton gradient across the mitochondrial membrane that is then used for ATP synthesis. In Thomasomys ischyrus (Strong-tailed oldfield mouse), this protein is Cytochrome b (MT-CYB).